The following is a 197-amino-acid chain: uncharacterized protein (197 aa).

6 helical membrane passes run 5–23, 27–46, 55–77, 87–109, 116–138, and 153–174; these read LNLLIFFIAALLIALGLRF, ISFAGLILLLAVVPALMLRF, VIAGIFVLGLALNALIGVALAYT, LSLLPLTLVLTANVFATSLVIRI, VFAFYFWFLISVGLAFLFLLPTG, and FVEFPILYSELALIPSAFCLVF.

The protein resides in the cell membrane. This is an uncharacterized protein from Archaeoglobus fulgidus (strain ATCC 49558 / DSM 4304 / JCM 9628 / NBRC 100126 / VC-16).